We begin with the raw amino-acid sequence, 1363 residues long: Kinesin-like protein kif7 (1363 aa).

One can recognise a Kinesin motor domain in the interval 15 to 347 (AVQVAVRVRP…LNYAKRARNI (333 aa)). Position 94–101 (94–101 (GQTGSGKT)) interacts with ATP. 2 coiled-coil regions span residues 358–385 (EPDR…SETR) and 491–552 (EDWR…LLAQ). A compositionally biased stretch (polar residues) spans 603–622 (DSSSYSEQTQWDGTHGNTHC). The interval 603–642 (DSSSYSEQTQWDGTHGNTHCESSRKLNRDEDGHMQTTRDK) is disordered. A compositionally biased stretch (basic and acidic residues) spans 623-640 (ESSRKLNRDEDGHMQTTR). Coiled coils occupy residues 714 to 1068 (LLQA…AAIE) and 1116 to 1225 (DKVV…LREM). Residues 1314–1346 (IVQPGMNSTHWSGSTSLPVTRPRREPRRSSLNT) form a disordered region. A compositionally biased stretch (polar residues) spans 1318–1331 (GMNSTHWSGSTSLP).

It belongs to the TRAFAC class myosin-kinesin ATPase superfamily. Kinesin family. KIF27 subfamily. As to quaternary structure, binds microtubules. Interacts with gli1 and sufu.

Its subcellular location is the cytoplasm. The protein localises to the cytoskeleton. It is found in the cell projection. It localises to the cilium. Its function is as follows. Acts downstream of smo as an intracellular repressor of hedgehog signaling pathway, mainly through the suppression of gli1 activity. This negative regulatory effect is enhanced in conjunction with the suppressor of fused (sufu) protein. Positively regulates gli2a activity by promoting its dissociation from sufu. Involved in the regulation of microtubular dynamics. The sequence is that of Kinesin-like protein kif7 (kif7) from Danio rerio (Zebrafish).